The chain runs to 354 residues: 3-dehydroquinate synthase (354 aa).

Residues 100–104 (GATGD), 124–125 (TT), Lys-136, Lys-145, and 163–166 (FLKT) contribute to the NAD(+) site. Residues Glu-178, His-242, and His-256 each contribute to the Zn(2+) site.

The protein belongs to the sugar phosphate cyclases superfamily. Dehydroquinate synthase family. Requires Co(2+) as cofactor. The cofactor is Zn(2+). It depends on NAD(+) as a cofactor.

The protein resides in the cytoplasm. The enzyme catalyses 7-phospho-2-dehydro-3-deoxy-D-arabino-heptonate = 3-dehydroquinate + phosphate. It participates in metabolic intermediate biosynthesis; chorismate biosynthesis; chorismate from D-erythrose 4-phosphate and phosphoenolpyruvate: step 2/7. Functionally, catalyzes the conversion of 3-deoxy-D-arabino-heptulosonate 7-phosphate (DAHP) to dehydroquinate (DHQ). This is 3-dehydroquinate synthase from Staphylococcus aureus (strain NCTC 8325 / PS 47).